The sequence spans 118 residues: Myotrophin (118 aa).

Cys-2 bears the N-acetylcysteine mark. The ANK 1 repeat unit spans residues 2-30; that stretch reads CDKEFMWALKNGDLDEVKDYVAKGEDVNR. An N6-acetyllysine mark is found at Lys-4, Lys-11, and Lys-24. Thr-31 carries the phosphothreonine modification. ANK repeat units lie at residues 34–66 and 67–99; these read GGRKPLHYAADCGQLEILEFLLLKGADINAPDK and HHITPLLSAVYEGHVSCVKLLLSKGADKTVKGP.

The protein belongs to the myotrophin family. In terms of assembly, interacts with RELA. Interacts with the heterodimer formed by CAPZA1 and CAPZB.

The protein resides in the cytoplasm. It localises to the nucleus. The protein localises to the perinuclear region. Promotes dimerization of NF-kappa-B subunits and regulates NF-kappa-B transcription factor activity. Promotes growth of cardiomyocytes, but not cardiomyocyte proliferation. Promotes cardiac muscle hypertrophy. Plays a role in the regulation of the growth of actin filaments. Inhibits the activity of the F-actin-capping protein complex formed by the CAPZA1 and CAPZB heterodimer. This chain is Myotrophin (MTPN), found in Bos taurus (Bovine).